The following is a 420-amino-acid chain: MFAEIISIGDELLTGQKVNTNAGFICSELAGAGIPVQRIIACADNVDAIQEQFRESLERAMLVIVTGGLGPTRDDMTKQSAQQFLNRELVVDRQTYERTLDRYKLLGKKPVSSLCENAMVIGDSVVVQNDEGLAPGMIIACEERFQGHYLVLLPGVPREMKSMMRNSVLPYFSGLCGTVIVHSHIKTTGIGEASLAKIIVEIENTLPDGTSLAYLPHTAGVSLRVSSVGTDRSSVEHDNREITDAIVSAARHFVYATSDISLEELVGSLLLKEGVTIATAESCTGGLIAGRLTDVPGSSGYFEQGFVVYSNASKEKNLGVRRETIETCGAVSEEVAAEMAEGCLQRSGVHMAVSSTGIAGPDGGTELKPAGMVCLGLAIRKEGEGVRTETETFVTRGDRLQNKLRFSEAALRMVWKALRS.

This sequence belongs to the CinA family.

The protein is CinA-like protein of Chlorobium phaeobacteroides (strain BS1).